A 409-amino-acid chain; its full sequence is Tyrosine--tRNA ligase (409 aa).

The 'HIGH' region motif lies at 54–63; that stretch reads PTAPDIHLGH. The short motif at 238-242 is the 'KMSKS' region element; the sequence is KMSKS. ATP is bound at residue lysine 241. In terms of domain architecture, S4 RNA-binding spans 347–407; it reads QGILRILREA…GKRKFARVKL (61 aa).

It belongs to the class-I aminoacyl-tRNA synthetase family. TyrS type 2 subfamily. In terms of assembly, homodimer.

It is found in the cytoplasm. The catalysed reaction is tRNA(Tyr) + L-tyrosine + ATP = L-tyrosyl-tRNA(Tyr) + AMP + diphosphate + H(+). Its function is as follows. Catalyzes the attachment of tyrosine to tRNA(Tyr) in a two-step reaction: tyrosine is first activated by ATP to form Tyr-AMP and then transferred to the acceptor end of tRNA(Tyr). This is Tyrosine--tRNA ligase from Bordetella pertussis (strain Tohama I / ATCC BAA-589 / NCTC 13251).